The sequence spans 652 residues: Threonine--tRNA ligase (652 aa).

The TGS domain maps to 1-61 (MIKLKLPDGS…DRDAEVEIVT (61 aa)). Residues 243 to 548 (DHRKIGREMD…LIENYEGRFP (306 aa)) are catalytic. Residues Cys-348, His-399, and His-525 each coordinate Zn(2+).

The protein belongs to the class-II aminoacyl-tRNA synthetase family. As to quaternary structure, homodimer. Zn(2+) is required as a cofactor.

The protein localises to the cytoplasm. It carries out the reaction tRNA(Thr) + L-threonine + ATP = L-threonyl-tRNA(Thr) + AMP + diphosphate + H(+). Functionally, catalyzes the attachment of threonine to tRNA(Thr) in a two-step reaction: L-threonine is first activated by ATP to form Thr-AMP and then transferred to the acceptor end of tRNA(Thr). Also edits incorrectly charged L-seryl-tRNA(Thr). The chain is Threonine--tRNA ligase from Parvibaculum lavamentivorans (strain DS-1 / DSM 13023 / NCIMB 13966).